We begin with the raw amino-acid sequence, 127 residues long: MORF4 family-associated protein 1 (127 aa).

The stretch at R92 to S126 forms a coiled coil.

This sequence belongs to the MORF4 family-associated protein family. As to quaternary structure, found in a complex composed of MORF4L1, MRFAP1 and RB1. Interacts via its N-terminus with MORF4L1. Interacts with CSTB and MORF4L2.

Its subcellular location is the nucleus. The protein localises to the cytoplasm. It is found in the perinuclear region. In Homo sapiens (Human), this protein is MORF4 family-associated protein 1.